The chain runs to 227 residues: Probable GTP-binding protein EngB (227 aa).

The region spanning 13 to 188 is the EngB-type G domain; sequence IGLEVAFAGR…AGVMGNWYEY (176 aa). GTP-binding positions include 21–28, 48–52, 67–70, 134–137, and 167–169; these read GRSNAGKS, GRTQM, DLPG, TKAD, and FSA. Residues S28 and T50 each coordinate Mg(2+).

The protein belongs to the TRAFAC class TrmE-Era-EngA-EngB-Septin-like GTPase superfamily. EngB GTPase family. It depends on Mg(2+) as a cofactor.

Functionally, necessary for normal cell division and for the maintenance of normal septation. This is Probable GTP-binding protein EngB from Psychrobacter cryohalolentis (strain ATCC BAA-1226 / DSM 17306 / VKM B-2378 / K5).